Consider the following 225-residue polypeptide: UPF0758 protein NMCC_1157 (225 aa).

Residues 102–224 (VLSDPDTVAD…VRSFRQLGLM (123 aa)) form the MPN domain. Zn(2+)-binding residues include histidine 173, histidine 175, and aspartate 186. Residues 173–186 (HNHPGGSPEPSQED) carry the JAMM motif motif.

Belongs to the UPF0758 family.

The sequence is that of UPF0758 protein NMCC_1157 from Neisseria meningitidis serogroup C (strain 053442).